Reading from the N-terminus, the 1097-residue chain is DNA-directed RNA polymerase subunit beta (1097 aa).

The disordered stretch occupies residues 1072 to 1097; it reads QDVNPRRSTPSRPTYESLGVADYDED.

This sequence belongs to the RNA polymerase beta chain family. As to quaternary structure, in cyanobacteria the RNAP catalytic core is composed of 2 alpha, 1 beta, 1 beta', 1 gamma and 1 omega subunit. When a sigma factor is associated with the core the holoenzyme is formed, which can initiate transcription.

The catalysed reaction is RNA(n) + a ribonucleoside 5'-triphosphate = RNA(n+1) + diphosphate. Functionally, DNA-dependent RNA polymerase catalyzes the transcription of DNA into RNA using the four ribonucleoside triphosphates as substrates. This Prochlorococcus marinus (strain MIT 9303) protein is DNA-directed RNA polymerase subunit beta.